The sequence spans 141 residues: Putative nickel-responsive regulator (141 aa).

Ni(2+) contacts are provided by His-80, His-91, His-93, and Cys-99.

This sequence belongs to the transcriptional regulatory CopG/NikR family. The cofactor is Ni(2+).

Functionally, transcriptional regulator. This Methanococcus maripaludis (strain C6 / ATCC BAA-1332) protein is Putative nickel-responsive regulator.